The sequence spans 407 residues: tRNA-specific 2-thiouridylase MnmA (407 aa).

Residues 20-27 (AMSGGVDS) and Leu-46 contribute to the ATP site. Cys-114 acts as the Nucleophile in catalysis. Cys-114 and Cys-210 are oxidised to a cystine. Gly-138 is a binding site for ATP. Residues 160–162 (RDQ) form an interaction with tRNA region. Cys-210 serves as the catalytic Cysteine persulfide intermediate.

Belongs to the MnmA/TRMU family.

Its subcellular location is the cytoplasm. It carries out the reaction S-sulfanyl-L-cysteinyl-[protein] + uridine(34) in tRNA + AH2 + ATP = 2-thiouridine(34) in tRNA + L-cysteinyl-[protein] + A + AMP + diphosphate + H(+). Catalyzes the 2-thiolation of uridine at the wobble position (U34) of tRNA, leading to the formation of s(2)U34. This chain is tRNA-specific 2-thiouridylase MnmA, found in Bartonella tribocorum (strain CIP 105476 / IBS 506).